A 238-amino-acid chain; its full sequence is Pyridoxine 5'-phosphate synthase (238 aa).

3-amino-2-oxopropyl phosphate is bound at residue N7. 9–10 provides a ligand contact to 1-deoxy-D-xylulose 5-phosphate; sequence DH. A 3-amino-2-oxopropyl phosphate-binding site is contributed by R18. H43 functions as the Proton acceptor in the catalytic mechanism. 1-deoxy-D-xylulose 5-phosphate-binding residues include R45 and H50. E70 (proton acceptor) is an active-site residue. T100 provides a ligand contact to 1-deoxy-D-xylulose 5-phosphate. H190 (proton donor) is an active-site residue. Residues G191 and 212–213 each bind 3-amino-2-oxopropyl phosphate; that span reads GH.

Belongs to the PNP synthase family. Homooctamer; tetramer of dimers.

The protein localises to the cytoplasm. The catalysed reaction is 3-amino-2-oxopropyl phosphate + 1-deoxy-D-xylulose 5-phosphate = pyridoxine 5'-phosphate + phosphate + 2 H2O + H(+). It participates in cofactor biosynthesis; pyridoxine 5'-phosphate biosynthesis; pyridoxine 5'-phosphate from D-erythrose 4-phosphate: step 5/5. Its function is as follows. Catalyzes the complicated ring closure reaction between the two acyclic compounds 1-deoxy-D-xylulose-5-phosphate (DXP) and 3-amino-2-oxopropyl phosphate (1-amino-acetone-3-phosphate or AAP) to form pyridoxine 5'-phosphate (PNP) and inorganic phosphate. In Prochlorococcus marinus (strain MIT 9515), this protein is Pyridoxine 5'-phosphate synthase.